Reading from the N-terminus, the 399-residue chain is Phosphoglycerate kinase (399 aa).

Residues 22 to 24 (DFN), Arg-37, 60 to 63 (HFGR), Arg-118, and Arg-151 contribute to the substrate site. ATP is bound by residues Lys-201, Glu-322, and 352 to 355 (GGDS).

It belongs to the phosphoglycerate kinase family. As to quaternary structure, monomer.

Its subcellular location is the cytoplasm. The enzyme catalyses (2R)-3-phosphoglycerate + ATP = (2R)-3-phospho-glyceroyl phosphate + ADP. The protein operates within carbohydrate degradation; glycolysis; pyruvate from D-glyceraldehyde 3-phosphate: step 2/5. The protein is Phosphoglycerate kinase of Wolbachia sp. subsp. Brugia malayi (strain TRS).